The chain runs to 37 residues: Omega-agatoxin-Aa3d (37 aa).

The protein belongs to the neurotoxin 04 (omega-agtx) family. 03 (type II/III omega-agtx) subfamily. In terms of processing, disulfide bonds are present. In terms of tissue distribution, expressed by the venom gland.

The protein resides in the secreted. Functionally, omega-agatoxins are antagonists of voltage-gated calcium channels. This toxin blocks calcium channels in insect central neurons but not at peripheral neuromuscular junctions. In vertebrates, it is broadly active against all high-threshold Cav1/CACNA1 channels and Cav2.2/CACNA1B channels. The sequence is that of Omega-agatoxin-Aa3d from Agelenopsis aperta (North American funnel-web spider).